Reading from the N-terminus, the 789-residue chain is Probable Xaa-Pro aminopeptidase SNOG_02267 (789 aa).

Residues Asp240, Asp251, Glu375, and Glu416 each coordinate Mn(2+). Disordered stretches follow at residues 607 to 658 (SMSK…TGLA) and 670 to 704 (NHVS…DDAL). Residues 622-637 (VISQKQIRNRRSVSST) are compositionally biased toward polar residues. Over residues 638-650 (ARHDLRGDRERPQ) the composition is skewed to basic and acidic residues.

The protein belongs to the peptidase M24B family. Requires Mn(2+) as cofactor.

The enzyme catalyses Release of any N-terminal amino acid, including proline, that is linked to proline, even from a dipeptide or tripeptide.. Catalyzes the removal of a penultimate prolyl residue from the N-termini of peptides. In Phaeosphaeria nodorum (strain SN15 / ATCC MYA-4574 / FGSC 10173) (Glume blotch fungus), this protein is Probable Xaa-Pro aminopeptidase SNOG_02267.